The chain runs to 212 residues: MAGVRVKICGLRTESDVKAAASSGAAYVGLVFFPKSPRHLELAQAQRLALAAPPGVAKVALTVDASDETLDAIVEAVPLDMLQLHGGESPERVAEVRARYGLPVMKAVGVADEGDLPQILEQSLAADQILIDAKPPKGAALPGGNGLSFDWRLISGRHWIRPWMLAGGLTAENLAEAVRRTGASQVDVSSGVESAPGVKDPARIAAFLQTAR.

Belongs to the TrpF family.

It carries out the reaction N-(5-phospho-beta-D-ribosyl)anthranilate = 1-(2-carboxyphenylamino)-1-deoxy-D-ribulose 5-phosphate. Its pathway is amino-acid biosynthesis; L-tryptophan biosynthesis; L-tryptophan from chorismate: step 3/5. The chain is N-(5'-phosphoribosyl)anthranilate isomerase from Cereibacter sphaeroides (strain ATCC 17029 / ATH 2.4.9) (Rhodobacter sphaeroides).